The primary structure comprises 921 residues: Ubiquitin carboxyl-terminal hydrolase 11 (921 aa).

Low complexity predominate over residues 1–16 (MAAVAADPAAAAVPAS). Residues 1-29 (MAAVAADPAAAAVPASAEDRETQPEAMPD) form a disordered region. Residues 28–133 (PDLDQQWRQI…DQPPIERKVI (106 aa)) form the DUSP domain. Residue lysine 194 is modified to N6-acetyllysine. Residues 257-889 (CGLTNLGNTC…AAYVLFYQRQ (633 aa)) enclose the USP domain. The active-site Nucleophile is the cysteine 266. The tract at residues 592 to 697 (TKPTSDDDDG…DRTTSPEEAQ (106 aa)) is disordered. Serine 596 carries the phosphoserine modification. Residues 597 to 624 (DDDDGDEKGDENEDEDVEDDSSSEEEKE) are compositionally biased toward acidic residues. Polar residues-rich tracts occupy residues 657–666 (LDNSLHTSQW) and 676–697 (FTLQ…EEAQ). Serine 692 is modified (phosphoserine). Histidine 847 (proton acceptor) is an active-site residue. The interval 893 to 921 (RRQSQTASSETPTSPASSSTPNSDIMDVN) is disordered. Low complexity predominate over residues 895 to 915 (QSQTASSETPTSPASSSTPNS). At serine 906 the chain carries Phosphoserine.

This sequence belongs to the peptidase C19 family. Monomer. Associated component of the Polycomb group (PcG) multiprotein PRC1-like complex. Interacts with RANBP9/RANBPM. Interacts with BRCA2. Interacts with CHUK/IKKA. Interacts with NFKBIA. Interacts with SPRY3, RAE1, MYCBP2/PAM, and KCTD6.

The protein localises to the nucleus. It is found in the cytoplasm. The protein resides in the chromosome. The catalysed reaction is Thiol-dependent hydrolysis of ester, thioester, amide, peptide and isopeptide bonds formed by the C-terminal Gly of ubiquitin (a 76-residue protein attached to proteins as an intracellular targeting signal).. Its function is as follows. Protease that can remove conjugated ubiquitin from target proteins and polyubiquitin chains. Inhibits the degradation of target proteins by the proteasome. Cleaves preferentially 'Lys-6' and 'Lys-63'-linked ubiquitin chains. Has lower activity with 'Lys-11' and 'Lys-33'-linked ubiquitin chains, and extremely low activity with 'Lys-27', 'Lys-29' and 'Lys-48'-linked ubiquitin chains (in vitro). Plays a role in the regulation of pathways leading to NF-kappa-B activation. Plays a role in the regulation of DNA repair after double-stranded DNA breaks. Acts as a chromatin regulator via its association with the Polycomb group (PcG) multiprotein PRC1-like complex; may act by deubiquitinating components of the PRC1-like comple. Promotes cell proliferation by deubiquitinating phosphorylated E2F1x. The sequence is that of Ubiquitin carboxyl-terminal hydrolase 11 from Rattus norvegicus (Rat).